The following is a 280-amino-acid chain: Ribonuclease P protein subunit p38 (280 aa).

Ala-2 bears the N-acetylalanine mark. Phosphoserine is present on residues Ser-12, Ser-221, and Ser-230. A disordered region spans residues 202–227 (WLPDRTQGPTDSLETEPSESQDNEIL). A compositionally biased stretch (acidic residues) spans 214–226 (LETEPSESQDNEI). The segment at 254–280 (QPLKIKKLIPNPSKIRKPPKSKKSISK) is disordered. Positions 267–280 (KIRKPPKSKKSISK) are enriched in basic residues.

The protein belongs to the eukaryotic ribosomal protein eL8 family. In terms of assembly, component of nuclear RNase P and RNase MRP ribonucleoproteins. RNase P consists of a catalytic RNA moiety and about 10 protein subunits; POP1, POP4, POP5, POP7, RPP14, RPP21, RPP25, RPP30, RPP38 and RPP40. Within the RNase P complex, POP1, POP7 and RPP25 form the 'finger' subcomplex, POP5, RPP14, RPP40 and homodimeric RPP30 form the 'palm' subcomplex, and RPP21, POP4 and RPP38 form the 'wrist' subcomplex. All subunits of the RNase P complex interact with the catalytic RNA. Several subunits of RNase P are also part of the RNase MRP complex. RNase MRP consists of a catalytic RNA moiety and about 8 protein subunits; POP1, POP7, RPP25, RPP30, RPP38, RPP40 and possibly also POP4 and POP5.

It is found in the nucleus. The protein localises to the nucleolus. Its function is as follows. Component of ribonuclease P, a ribonucleoprotein complex that generates mature tRNA molecules by cleaving their 5'-ends. Also a component of the MRP ribonuclease complex, which cleaves pre-rRNA sequences. This chain is Ribonuclease P protein subunit p38 (Rpp38), found in Mus musculus (Mouse).